The sequence spans 451 residues: UDP-N-acetylmuramoylalanine--D-glutamate ligase (451 aa).

119-125 (GSNGKTT) is an ATP binding site.

It belongs to the MurCDEF family.

It is found in the cytoplasm. The enzyme catalyses UDP-N-acetyl-alpha-D-muramoyl-L-alanine + D-glutamate + ATP = UDP-N-acetyl-alpha-D-muramoyl-L-alanyl-D-glutamate + ADP + phosphate + H(+). Its pathway is cell wall biogenesis; peptidoglycan biosynthesis. Its function is as follows. Cell wall formation. Catalyzes the addition of glutamate to the nucleotide precursor UDP-N-acetylmuramoyl-L-alanine (UMA). The polypeptide is UDP-N-acetylmuramoylalanine--D-glutamate ligase (Streptococcus mutans serotype c (strain ATCC 700610 / UA159)).